The following is a 515-amino-acid chain: Transcription termination factor Rho (515 aa).

Residues 146–221 form the Rho RNA-BD domain; sequence DVLFTGVLDV…VKIKSINDQD (76 aa). ATP contacts are provided by residues 264–269, 276–281, and Arg307; these read GKGQRA and KAGKTT.

This sequence belongs to the Rho family. As to quaternary structure, homohexamer. The homohexamer assembles into an open ring structure.

Its function is as follows. Facilitates transcription termination by a mechanism that involves Rho binding to the nascent RNA, activation of Rho's RNA-dependent ATPase activity, and release of the mRNA from the DNA template. The protein is Transcription termination factor Rho of Borreliella burgdorferi (strain ATCC 35210 / DSM 4680 / CIP 102532 / B31) (Borrelia burgdorferi).